The sequence spans 322 residues: MKLRNVSKNNLNKEDTKLSIEQFGGNVEWFNITKTLSESLPYIQQFSGETFIIKYGGAAMTDKKLAESFAHDVVLLKQLGINPIVVHGGGNKINEFLEKINKKSTFINGLRITDAETLEIVEMVLCGLVNKNITQLINNAGGNAIGLCGKDANLIEAKKICYTYKENQSNNVEKILDMGFVGEPHDINTDLLFFMEESDFIPVIAPVCSGENNLTYNVNADLVAGALANAMAAAKLIILTNVSGVTDSNGNLISELSVSHAENLIDNGTAHTGMIPKLQTCVKVVKEGYGSAHIIDGRIPHVLLLELFTIHGTGTMVVNSGV.

Residues 89–90 (GG), Arg-111, and Asn-217 each bind substrate.

It belongs to the acetylglutamate kinase family. ArgB subfamily.

The protein resides in the cytoplasm. It catalyses the reaction N-acetyl-L-glutamate + ATP = N-acetyl-L-glutamyl 5-phosphate + ADP. Its pathway is amino-acid biosynthesis; L-arginine biosynthesis; N(2)-acetyl-L-ornithine from L-glutamate: step 2/4. Its function is as follows. Catalyzes the ATP-dependent phosphorylation of N-acetyl-L-glutamate. In Ehrlichia ruminantium (strain Gardel), this protein is Acetylglutamate kinase.